The primary structure comprises 105 residues: uncharacterized protein (105 aa).

Residues 8-28 (FMTAGIIIALIIAVLAPFLAS) form a helical membrane-spanning segment. Residues 32-53 (DGLESTAEKVMPNPETEPVLES) are disordered. A helical membrane pass occupies residues 72 to 92 (VSMVIGTILVLAIAYGVGAVF).

To M.jannaschii MJ1570.

It localises to the cell membrane. This is an uncharacterized protein from Methanothermobacter thermautotrophicus (strain ATCC 29096 / DSM 1053 / JCM 10044 / NBRC 100330 / Delta H) (Methanobacterium thermoautotrophicum).